Consider the following 195-residue polypeptide: MARYIGPKTKISRKFGELIYGKTNKSFEKKKYPPGNSSSRNIKKTFYSTQLLEKQKIKYTYGILERQFLKMFYKASKKKGIKGEILLQLCESRLDNIVYRLNLSHSRPEARQLVSHRHITVNGKIVNIPSFNLKPGDKISLKEKHKHKANKNKLLGSDWLSWDNEKMIGIFKYIPNRNQITENINEKLIVELYSK.

Residues Ser-92–Asn-152 enclose the S4 RNA-binding domain.

Belongs to the universal ribosomal protein uS4 family. As to quaternary structure, part of the 30S ribosomal subunit. Contacts protein S5. The interaction surface between S4 and S5 is involved in control of translational fidelity.

Functionally, one of the primary rRNA binding proteins, it binds directly to 16S rRNA where it nucleates assembly of the body of the 30S subunit. In terms of biological role, with S5 and S12 plays an important role in translational accuracy. The polypeptide is Small ribosomal subunit protein uS4 (Karelsulcia muelleri (strain GWSS) (Sulcia muelleri)).